Here is a 155-residue protein sequence, read N- to C-terminus: Small ribosomal subunit protein uS7 (155 aa).

Belongs to the universal ribosomal protein uS7 family. Part of the 30S ribosomal subunit. Contacts proteins S9 and S11.

Functionally, one of the primary rRNA binding proteins, it binds directly to 16S rRNA where it nucleates assembly of the head domain of the 30S subunit. Is located at the subunit interface close to the decoding center, probably blocks exit of the E-site tRNA. This Xylella fastidiosa (strain M23) protein is Small ribosomal subunit protein uS7.